Reading from the N-terminus, the 90-residue chain is Small ribosomal subunit protein bS16 (90 aa).

This sequence belongs to the bacterial ribosomal protein bS16 family.

This is Small ribosomal subunit protein bS16 from Geobacillus sp. (strain WCH70).